The sequence spans 159 residues: 2-C-methyl-D-erythritol 2,4-cyclodiphosphate synthase (159 aa).

2 residues coordinate a divalent metal cation: D10 and H12. 4-CDP-2-C-methyl-D-erythritol 2-phosphate is bound by residues 10–12 (DVH) and 36–37 (HS). H44 contributes to the a divalent metal cation binding site. Residues 58-60 (DIG), 63-67 (FPDTD), 102-108 (AQVPKMA), 134-137 (TTTE), F141, and R144 each bind 4-CDP-2-C-methyl-D-erythritol 2-phosphate.

This sequence belongs to the IspF family. Homotrimer. It depends on a divalent metal cation as a cofactor.

The catalysed reaction is 4-CDP-2-C-methyl-D-erythritol 2-phosphate = 2-C-methyl-D-erythritol 2,4-cyclic diphosphate + CMP. Its pathway is isoprenoid biosynthesis; isopentenyl diphosphate biosynthesis via DXP pathway; isopentenyl diphosphate from 1-deoxy-D-xylulose 5-phosphate: step 4/6. Its function is as follows. Involved in the biosynthesis of isopentenyl diphosphate (IPP) and dimethylallyl diphosphate (DMAPP), two major building blocks of isoprenoid compounds. Catalyzes the conversion of 4-diphosphocytidyl-2-C-methyl-D-erythritol 2-phosphate (CDP-ME2P) to 2-C-methyl-D-erythritol 2,4-cyclodiphosphate (ME-CPP) with a corresponding release of cytidine 5-monophosphate (CMP). The polypeptide is 2-C-methyl-D-erythritol 2,4-cyclodiphosphate synthase (Shewanella woodyi (strain ATCC 51908 / MS32)).